The chain runs to 371 residues: MSNQHALLISNLLPVGSNISTWWNFGSMLLTCLMLQVLTGFFLAIHYTANINLAFSSVVHITRDVPCGWIMQNTHAIGASLFFICIYIHIARGLYYGLYLNKNVWLSGVTLLMTLMATAFFGYVLPWGQMSFWAATVITNLLTAIPYLGVAVTTWLWGGFSINDPTLTRFCALHFILPFIIISLSSIHIILLHNEGSNNPLGTNSDIDKIPFHPYHSYKDFMTTTSMIILLPISLSVSPDLLXDPEKLTKPNPXXXXXXXXXXXXXXXXYGLLRSIPNKLGGTLALLMSILILTLPPFTHTSYIRPMTFRPLSQTLFWTLIATFVMITWTATKPVEPPFITISQLTSIFYFSFFIMNPLLSWTEHKIMMQS.

Helical transmembrane passes span 25 to 45 (FGSM…FLAI), 69 to 90 (WIMQ…YIHI), 105 to 125 (WLSG…GYVL), and 170 to 190 (FCAL…IHII). Heme b is bound by residues H75 and H89. Heme b contacts are provided by H174 and H188. H193 is a binding site for a ubiquinone. 4 consecutive transmembrane segments (helical) span residues 218–238 (YKDF…LSVS), 280–300 (LGGT…PFTH), 312–332 (LSQT…WTAT), and 339–358 (FITI…IMNP).

The protein belongs to the cytochrome b family. In terms of assembly, the cytochrome bc1 complex contains 3 respiratory subunits (MT-CYB, CYC1 and UQCRFS1), 2 core proteins (UQCRC1 and UQCRC2) and probably 6 low-molecular weight proteins. Heme b is required as a cofactor.

The protein localises to the mitochondrion inner membrane. Functionally, component of the ubiquinol-cytochrome c reductase complex (complex III or cytochrome b-c1 complex) that is part of the mitochondrial respiratory chain. The b-c1 complex mediates electron transfer from ubiquinol to cytochrome c. Contributes to the generation of a proton gradient across the mitochondrial membrane that is then used for ATP synthesis. This is Cytochrome b (MT-CYB) from Micrurus tener microgalbineus (Spotted coral snake).